The sequence spans 92 residues: MRHTRRNIFYHELIGLRIKIIEYPDKSLVGLTGLVIDETQKTLLIETNSGRRVRVLKANGVFQFMLPNKEKVIIRGVQILGRPEDRLKNIVR.

Belongs to the eukaryotic/archaeal RNase P protein component 1 family. Consists of a catalytic RNA component and at least 4-5 protein subunits.

The protein resides in the cytoplasm. The enzyme catalyses Endonucleolytic cleavage of RNA, removing 5'-extranucleotides from tRNA precursor.. Its function is as follows. Part of ribonuclease P, a protein complex that generates mature tRNA molecules by cleaving their 5'-ends. This chain is Ribonuclease P protein component 1, found in Staphylothermus marinus (strain ATCC 43588 / DSM 3639 / JCM 9404 / F1).